The sequence spans 1921 residues: Disks large homolog 5 (1921 aa).

The CARD domain maps to 1–90 (MEPQRRELLA…HLLPILYLNG (90 aa)). Positions 116–143 (ESSSSLSSVGTTGKAPSPPPLLTEQQAN) are disordered. Residues 139 to 601 (EQQANDTVEN…KEARFRQLMA (463 aa)) are a coiled coil. A phosphoserine mark is found at S264 and S295. 2 PDZ domains span residues 620 to 710 (VVEF…RRRK) and 705 to 796 (VVRR…LKVF). A disordered region spans residues 857-898 (ELGHSGGSSSFLHKPFSGSSSPVSPQACPSTSERSLNSFRSD). Positions 873-898 (SGSSSPVSPQACPSTSERSLNSFRSD) are enriched in polar residues. S900 is subject to Phosphoserine. Residues 930-1121 (EVPLDKIDPE…RPKSAPSFRP (192 aa)) are disordered. The residue at position 984 (T984) is a Phosphothreonine. Position 1000 is a phosphoserine (S1000). The residue at position 1011 (T1011) is a Phosphothreonine. The span at 1017–1030 (RRSDSIKFQHRLET) shows a compositional bias: basic and acidic residues. Phosphoserine is present on S1021. The span at 1045-1055 (TSPPSAPPPSM) shows a compositional bias: pro residues. Residue T1183 is modified to Phosphothreonine. Disordered regions lie at residues 1204-1227 (VLPCGSPPVPRDAGSQSLSPSVQH), 1243-1266 (YSEMRASQGSNSLPSSARLGSSSN), and 1280-1343 (PRYP…KDRP). S1209 bears the Phosphoserine mark. The span at 1217 to 1227 (GSQSLSPSVQH) shows a compositional bias: polar residues. Residues 1252-1266 (SNSLPSSARLGSSSN) show a composition bias toward low complexity. Phosphoserine is present on S1263. Over residues 1292 to 1324 (GSLSHSECSTPPRSPLNIDTLSSCSQPQTTAST) the composition is skewed to polar residues. The residue at position 1334 (S1334) is a Phosphoserine. One can recognise a PDZ 3 domain in the interval 1350–1429 (HVKVQKGSEP…TITILAQYNP (80 aa)). Composition is skewed to polar residues over residues 1434–1443 (LNSHSRSSSH), 1450–1460 (PHSTLQGSSAG), and 1483–1495 (AKQSASSTRSVGD). Residues 1434–1501 (LNSHSRSSSH…SVGDTTKKTP (68 aa)) are disordered. One can recognise a PDZ 4 domain in the interval 1504–1585 (RIVFIKKSQL…SLRLKVQYRH (82 aa)). In terms of domain architecture, SH3 spans 1596 to 1664 (GDSFYIRALY…PSKYVMDQEF (69 aa)). S1669 is modified (phosphoserine). A Guanylate kinase-like domain is found at 1724 to 1907 (DSVSLAYQRV…ICTQILAMVS (184 aa)).

It belongs to the MAGUK family. In terms of assembly, interacts with MPP1. Interacts with CTNNB1 and with the third SH3 domain of SORBS3 to form a ternary complex. Interacts (via coiled-coil domain) with MARK3. Interacts (via PDZ domain 3) with STK3/MST2 and STK4/MST1. Interacts with SCRIB. Interacts with CTNB1. Interacts with SMO and (via PDZ4 or guanylate kinase-like domain) with KIF7. As to expression, brain (at protein level).

The protein localises to the cell junction. It localises to the cell membrane. The protein resides in the postsynaptic density. It is found in the cytoplasm. Its subcellular location is the cytoskeleton. The protein localises to the cilium basal body. In terms of biological role, acts as a regulator of the Hippo signaling pathway. Negatively regulates the Hippo signaling pathway by mediating the interaction of MARK3 with STK3/4, bringing them together to promote MARK3-dependent hyperphosphorylation and inactivation of STK3 kinase activity toward LATS1. Positively regulates the Hippo signaling by mediating the interaction of SCRIB with STK4/MST1 and LATS1 which is important for the activation of the Hippo signaling pathway. Involved in regulating cell proliferation, maintenance of epithelial polarity, epithelial-mesenchymal transition (EMT), cell migration and invasion. Plays an important role in dendritic spine formation and synaptogenesis in cortical neurons; regulates synaptogenesis by enhancing the cell surface localization of N-cadherin. Acts as a positive regulator of hedgehog (Hh) signaling pathway. Plays a critical role in the early point of the SMO activity cycle by interacting with SMO at the ciliary base to induce the accumulation of KIF7 and GLI2 at the ciliary tip for GLI2 activation. The protein is Disks large homolog 5 (Dlg5) of Mus musculus (Mouse).